A 329-amino-acid polypeptide reads, in one-letter code: DNA-directed RNA polymerase subunit alpha (329 aa).

The alpha N-terminal domain (alpha-NTD) stretch occupies residues 1 to 234; sequence MQSAVNEFLT…QQLAVFVDLE (234 aa). The segment at 248–329 is alpha C-terminal domain (alpha-CTD); it reads IDPVLLRPVD…WPPASLKNND (82 aa).

This sequence belongs to the RNA polymerase alpha chain family. Homodimer. The RNAP catalytic core consists of 2 alpha, 1 beta, 1 beta' and 1 omega subunit. When a sigma factor is associated with the core the holoenzyme is formed, which can initiate transcription.

The catalysed reaction is RNA(n) + a ribonucleoside 5'-triphosphate = RNA(n+1) + diphosphate. Functionally, DNA-dependent RNA polymerase catalyzes the transcription of DNA into RNA using the four ribonucleoside triphosphates as substrates. The sequence is that of DNA-directed RNA polymerase subunit alpha from Saccharophagus degradans (strain 2-40 / ATCC 43961 / DSM 17024).